The sequence spans 251 residues: Homeobox protein notochord (251 aa).

Residues 1-14 (MPSPRPRGSPPPAP) are compositionally biased toward pro residues. Residues 1–47 (MPSPRPRGSPPPAPSGSRVRPPRSGRSPAPRSPTGPNTPRAPGRFES) form a disordered region. A compositionally biased stretch (low complexity) spans 15–35 (SGSRVRPPRSGRSPAPRSPTG). The homeobox DNA-binding region spans 156–215 (QKRVRTMFNLEQLEELEKVFAKQHNLVGKKRAQLAARLKLTENQVRVWFQNRRVKYQKQQ). Low complexity predominate over residues 224–242 (AEAASLDEPSSSSIASIQS). Residues 224-251 (AEAASLDEPSSSSIASIQSDDAESGVDG) form a disordered region.

The protein resides in the nucleus. Transcription regulator acting downstream of both FOXA2 and Brachyury (T) during notochord development. Required for node morphogenesis. Is essential for cilia formation in the posterior notochord (PNC) and for left-right patterning; acts upstream of FOXJ1 and RFX3 in this process and is required for the expression of various components important for axonemal assembly and function. Plays a role in regulating axial versus paraxial cell fate. Activates the transcription of ciliary proteins C11orf97 homolog, FAM183B and SPACA9 in the embryonic ventral node. This chain is Homeobox protein notochord (NOTO), found in Homo sapiens (Human).